The chain runs to 281 residues: Small ribosomal subunit protein uS2 (281 aa).

The tract at residues 225–281 is disordered; the sequence is LMERKAEKPEEEETEEAAPRRERRARSGARRSRQNENEATAEAATEVAEAPEAEEAE. A compositionally biased stretch (basic residues) spans 245 to 256; it reads RERRARSGARRS. Residues 262–272 show a composition bias toward low complexity; it reads EATAEAATEVA.

The protein belongs to the universal ribosomal protein uS2 family.

In Porphyromonas gingivalis (strain ATCC 33277 / DSM 20709 / CIP 103683 / JCM 12257 / NCTC 11834 / 2561), this protein is Small ribosomal subunit protein uS2.